Reading from the N-terminus, the 119-residue chain is Large ribosomal subunit protein uL18 (119 aa).

The protein belongs to the universal ribosomal protein uL18 family. Part of the 50S ribosomal subunit; part of the 5S rRNA/L5/L18/L25 subcomplex. Contacts the 5S and 23S rRNAs.

Functionally, this is one of the proteins that bind and probably mediate the attachment of the 5S RNA into the large ribosomal subunit, where it forms part of the central protuberance. This chain is Large ribosomal subunit protein uL18, found in Staphylococcus aureus (strain Mu3 / ATCC 700698).